Here is a 513-residue protein sequence, read N- to C-terminus: Histidine ammonia-lyase (513 aa).

Residues 142–144 constitute a cross-link (5-imidazolinone (Ala-Gly)); that stretch reads ASG. S143 bears the 2,3-didehydroalanine (Ser) mark.

The protein belongs to the PAL/histidase family. Post-translationally, contains an active site 4-methylidene-imidazol-5-one (MIO), which is formed autocatalytically by cyclization and dehydration of residues Ala-Ser-Gly.

The protein localises to the cytoplasm. It catalyses the reaction L-histidine = trans-urocanate + NH4(+). Its pathway is amino-acid degradation; L-histidine degradation into L-glutamate; N-formimidoyl-L-glutamate from L-histidine: step 1/3. The polypeptide is Histidine ammonia-lyase (Mesorhizobium japonicum (strain LMG 29417 / CECT 9101 / MAFF 303099) (Mesorhizobium loti (strain MAFF 303099))).